Here is an 82-residue protein sequence, read N- to C-terminus: RNA-binding protein BH0128 (82 aa).

This sequence belongs to the eukaryotic ribosomal protein eL8 family.

The protein is RNA-binding protein BH0128 of Halalkalibacterium halodurans (strain ATCC BAA-125 / DSM 18197 / FERM 7344 / JCM 9153 / C-125) (Bacillus halodurans).